The primary structure comprises 251 residues: Cell division protein ZapD (251 aa).

It belongs to the ZapD family. As to quaternary structure, interacts with FtsZ.

It localises to the cytoplasm. Functionally, cell division factor that enhances FtsZ-ring assembly. Directly interacts with FtsZ and promotes bundling of FtsZ protofilaments, with a reduction in FtsZ GTPase activity. The polypeptide is Cell division protein ZapD (Nitrosomonas eutropha (strain DSM 101675 / C91 / Nm57)).